A 644-amino-acid polypeptide reads, in one-letter code: Exoribonuclease 2 (644 aa).

The 328-residue stretch at 189–516 (REDLTSLDFV…NHRLLKAVIK (328 aa)) folds into the RNB domain. Residues 561–643 (GTRFAAEIVD…ETRSIIARPV (83 aa)) form the S1 motif domain.

The protein belongs to the RNR ribonuclease family. RNase II subfamily.

It is found in the cytoplasm. It catalyses the reaction Exonucleolytic cleavage in the 3'- to 5'-direction to yield nucleoside 5'-phosphates.. Involved in mRNA degradation. Hydrolyzes single-stranded polyribonucleotides processively in the 3' to 5' direction. This is Exoribonuclease 2 from Shigella flexneri.